Consider the following 114-residue polypeptide: NAD(P)H-quinone oxidoreductase subunit M (114 aa).

The protein belongs to the complex I NdhM subunit family. As to quaternary structure, NDH-1 can be composed of about 15 different subunits; different subcomplexes with different compositions have been identified which probably have different functions.

Its subcellular location is the cellular thylakoid membrane. It carries out the reaction a plastoquinone + NADH + (n+1) H(+)(in) = a plastoquinol + NAD(+) + n H(+)(out). The enzyme catalyses a plastoquinone + NADPH + (n+1) H(+)(in) = a plastoquinol + NADP(+) + n H(+)(out). NDH-1 shuttles electrons from an unknown electron donor, via FMN and iron-sulfur (Fe-S) centers, to quinones in the respiratory and/or the photosynthetic chain. The immediate electron acceptor for the enzyme in this species is believed to be plastoquinone. Couples the redox reaction to proton translocation, and thus conserves the redox energy in a proton gradient. Cyanobacterial NDH-1 also plays a role in inorganic carbon-concentration. The polypeptide is NAD(P)H-quinone oxidoreductase subunit M (Acaryochloris marina (strain MBIC 11017)).